Reading from the N-terminus, the 330-residue chain is G-protein coupled receptor 3 (330 aa).

Topologically, residues 1 to 42 (MMWGAGSPLAWLSAGSGNVNVSSVGPAEGPTGPAAPLPSPKA) are extracellular. Asparagine 20 is a glycosylation site (N-linked (GlcNAc...) asparagine). Residues 43–62 (WDVVLCISGTLVSCENALVV) traverse the membrane as a helical segment. The Cytoplasmic portion of the chain corresponds to 63–74 (AIIVGTPAFRAP). A helical membrane pass occupies residues 75–98 (MFLLVGSLAVADLLAGLGLVLHFA). The Extracellular portion of the chain corresponds to 99–110 (AVFCIGSAEMSL). The helical transmembrane segment at 111–132 (VLVGVLAMAFTASIGSLLAITV) threads the bilayer. The Cytoplasmic portion of the chain corresponds to 133-153 (DRYLSLYNALTYYSETTVTRT). Residues 154–173 (YVMLALVWGGALGLGLLPVL) form a helical membrane-spanning segment. The Extracellular segment spans residues 174–198 (AWNCLDGLTTCGVVYPLSKNHLVVL). Residues 199–217 (AIAFFMVFGIMLQLYAQIC) form a helical membrane-spanning segment. At 218–245 (RIVCRHAQQIALQRHLLPASHYVATRKG) the chain is on the cytoplasmic side. A helical membrane pass occupies residues 246-272 (IATLAVVLGAFAACWLPFTVYCLLGDA). Topologically, residues 273-277 (HSPPL) are extracellular. Residues 278–299 (YTYLTLLPATYNSMINPIIYAF) traverse the membrane as a helical segment. Over 300–330 (RNQDVQKVLWAVCCCCSSSKIPFRSRSPSDV) the chain is Cytoplasmic. The S-palmitoyl cysteine moiety is linked to residue cysteine 313. Residues serine 324, serine 326, and serine 328 each carry the phosphoserine modification.

Belongs to the G-protein coupled receptor 1 family. Expressed predominantly in the central nervous system, and at low levels in the lung, kidney, testis, ovary and eye. Highly expressed in regions of the brain implicated in the Alzheimer disease.

It is found in the cell membrane. Functionally, constitutively active G-protein coupled receptor that maintains high 3'-5'-cyclic adenosine monophosphate (cAMP) levels that a plays a role in serveral processes including meiotic arrest in oocytes or neuronal development via activation of numerous intracellular signaling pathways. Acts as an essential activator of thermogenic adipocytes and drives thermogenesis via its intrinsic G(s)-coupling activity without the requirement of a ligand. Has a potential role in modulating a number of brain functions, including behavioral responses to stress, amyloid-beta peptide generation in neurons. Stimulates neurite outgrowth in cerebellar granular neurons modulated via PKA, ERK, and most strongly PI3K-mediated signaling pathways. The sequence is that of G-protein coupled receptor 3 (GPR3) from Homo sapiens (Human).